Reading from the N-terminus, the 289-residue chain is E3 ubiquitin-protein ligase MARCHF5 (289 aa).

An RING-CH-type zinc finger spans residues 4 to 73; the sequence is VDEPPEKHCW…PQCGTEYRIV (70 aa). Cysteine 12, cysteine 15, cysteine 31, cysteine 33, histidine 41, cysteine 44, cysteine 63, and cysteine 66 together coordinate Zn(2+). The next 4 helical transmembrane spans lie at 97 to 117, 137 to 157, 202 to 222, and 236 to 256; these read FAAA…YGAV, PLFL…GKMI, LSVS…NLVG, and TILG…YFKQ.

It localises to the mitochondrion outer membrane. It is found in the endoplasmic reticulum membrane. The enzyme catalyses S-ubiquitinyl-[E2 ubiquitin-conjugating enzyme]-L-cysteine + [acceptor protein]-L-lysine = [E2 ubiquitin-conjugating enzyme]-L-cysteine + N(6)-ubiquitinyl-[acceptor protein]-L-lysine.. The protein operates within protein modification; protein ubiquitination. Its function is as follows. Mitochondrial E3 ubiquitin-protein ligase that plays a crucial role in the control of mitochondrial morphology by acting as a positive regulator of mitochondrial fission. May play a role in the prevention of cell senescence acting as a regulator of mitochondrial quality control. The sequence is that of E3 ubiquitin-protein ligase MARCHF5 (marchf5) from Danio rerio (Zebrafish).